The primary structure comprises 59 residues: uncharacterized protein (59 aa).

Residues methionine 1–lysine 59 are disordered. 2 stretches are compositionally biased toward basic and acidic residues: residues glycine 24–arginine 37 and leucine 50–lysine 59.

This is an uncharacterized protein from Salmonella phage P22 (Bacteriophage P22).